We begin with the raw amino-acid sequence, 203 residues long: Superoxide dismutase [Mn] (203 aa).

4 residues coordinate Mn(2+): histidine 27, histidine 81, aspartate 164, and histidine 168.

It belongs to the iron/manganese superoxide dismutase family. Homodimer. Mn(2+) is required as a cofactor.

It catalyses the reaction 2 superoxide + 2 H(+) = H2O2 + O2. In terms of biological role, destroys superoxide anion radicals which are normally produced within the cells and which are toxic to biological systems. The protein is Superoxide dismutase [Mn] (sodA) of Pseudomonas putida (Arthrobacter siderocapsulatus).